The primary structure comprises 332 residues: Holliday junction branch migration complex subunit RuvB (332 aa).

A large ATPase domain (RuvB-L) region spans residues Met1 to Tyr181. Residues Leu20, Arg21, Gly62, Lys65, Thr66, Thr67, Glu128–Phe130, Arg171, Tyr181, and Arg218 each bind ATP. Thr66 contributes to the Mg(2+) binding site. The small ATPAse domain (RuvB-S) stretch occupies residues Gln182–Asp252. Positions Arg255–Thr332 are head domain (RuvB-H). Residues Arg291, Arg310, Arg312, and Arg315 each contribute to the DNA site.

This sequence belongs to the RuvB family. In terms of assembly, homohexamer. Forms an RuvA(8)-RuvB(12)-Holliday junction (HJ) complex. HJ DNA is sandwiched between 2 RuvA tetramers; dsDNA enters through RuvA and exits via RuvB. An RuvB hexamer assembles on each DNA strand where it exits the tetramer. Each RuvB hexamer is contacted by two RuvA subunits (via domain III) on 2 adjacent RuvB subunits; this complex drives branch migration. In the full resolvosome a probable DNA-RuvA(4)-RuvB(12)-RuvC(2) complex forms which resolves the HJ.

It localises to the cytoplasm. It carries out the reaction ATP + H2O = ADP + phosphate + H(+). Functionally, the RuvA-RuvB-RuvC complex processes Holliday junction (HJ) DNA during genetic recombination and DNA repair, while the RuvA-RuvB complex plays an important role in the rescue of blocked DNA replication forks via replication fork reversal (RFR). RuvA specifically binds to HJ cruciform DNA, conferring on it an open structure. The RuvB hexamer acts as an ATP-dependent pump, pulling dsDNA into and through the RuvAB complex. RuvB forms 2 homohexamers on either side of HJ DNA bound by 1 or 2 RuvA tetramers; 4 subunits per hexamer contact DNA at a time. Coordinated motions by a converter formed by DNA-disengaged RuvB subunits stimulates ATP hydrolysis and nucleotide exchange. Immobilization of the converter enables RuvB to convert the ATP-contained energy into a lever motion, pulling 2 nucleotides of DNA out of the RuvA tetramer per ATP hydrolyzed, thus driving DNA branch migration. The RuvB motors rotate together with the DNA substrate, which together with the progressing nucleotide cycle form the mechanistic basis for DNA recombination by continuous HJ branch migration. Branch migration allows RuvC to scan DNA until it finds its consensus sequence, where it cleaves and resolves cruciform DNA. This is Holliday junction branch migration complex subunit RuvB from Streptococcus pyogenes serotype M3 (strain ATCC BAA-595 / MGAS315).